Consider the following 398-residue polypeptide: FK506-binding protein 4 (398 aa).

Disordered stretches follow at residues 66 to 120 (EVDE…DEYE), 164 to 232 (VKHP…QLAK), and 245 to 288 (DLIA…KKNK). A compositionally biased stretch (acidic residues) spans 170–228 (EPLEDLYSDEDSEEYSDDELDQEIEEDDELDHDEASSEESDEDQEFYDAISEGDEDIDE). The segment covering 264-287 (PETKKSKKTKDEKNTKATENEKKN) has biased composition (basic and acidic residues). Positions 312-398 (GSKVGMRYIG…TFDVKLVSLK (87 aa)) constitute a PPIase FKBP-type domain.

The protein belongs to the FKBP-type PPIase family. FKBP3/4 subfamily. As to quaternary structure, binds to histones H3 and H4.

It localises to the nucleus. The enzyme catalyses [protein]-peptidylproline (omega=180) = [protein]-peptidylproline (omega=0). Inhibited by both FK506 and rapamycin. In terms of biological role, PPIase that acts as a histone chaperone. Histone proline isomerase that increases the rate of cis-trans isomerization at prolines on the histone H3 N-terminal tail. Proline isomerization influences H3 methylation thereby regulating gene expression. The chain is FK506-binding protein 4 (FPR4) from Candida glabrata (strain ATCC 2001 / BCRC 20586 / JCM 3761 / NBRC 0622 / NRRL Y-65 / CBS 138) (Yeast).